Consider the following 241-residue polypeptide: MRSGVIAQKVGMTRVFTETGEHIPVTVLKLGNCQVLAHRTTEKNGYVALQLGSGARKTVYMPKAERGQFAVAKVEPKRKVAEFRVSEDALIPVGAEIQADHFVVGQFVDVTGTSVGKGFAGGMKRWNFGGLRATHGVSVSHRSIGSTGGRQDPGKTFKNKKMPGHMGVDRITTLNLRVVQLDVERGLILVEGAVPGSKGGWISVRDAVKKALPADAPKPGKFRLANGGEEAAAPAAEQEGV.

2 disordered regions span residues 139–164 and 215–241; these read VSHR…KMPG and DAPK…QEGV. Gln-151 carries the post-translational modification N5-methylglutamine. The span at 225–241 shows a compositional bias: low complexity; sequence ANGGEEAAAPAAEQEGV.

This sequence belongs to the universal ribosomal protein uL3 family. Part of the 50S ribosomal subunit. Forms a cluster with proteins L14 and L19. Methylated by PrmB.

In terms of biological role, one of the primary rRNA binding proteins, it binds directly near the 3'-end of the 23S rRNA, where it nucleates assembly of the 50S subunit. This chain is Large ribosomal subunit protein uL3, found in Rhodopseudomonas palustris (strain HaA2).